The following is a 57-amino-acid chain: Protein translocase subunit SecE (57 aa).

The chain crosses the membrane as a helical span at residues 30–50; sequence LIAGAGIVFVGFLGFLIFAIM.

Belongs to the SecE/SEC61-gamma family. As to quaternary structure, component of the Sec protein translocase complex. Heterotrimer consisting of SecY (alpha), SecG (beta) and SecE (gamma) subunits. The heterotrimers can form oligomers, although 1 heterotrimer is thought to be able to translocate proteins. Interacts with the ribosome. May interact with SecDF, and other proteins may be involved.

The protein resides in the cell membrane. Functionally, essential subunit of the Sec protein translocation channel SecYEG. Clamps together the 2 halves of SecY. May contact the channel plug during translocation. This Haloquadratum walsbyi (strain DSM 16790 / HBSQ001) protein is Protein translocase subunit SecE.